The sequence spans 361 residues: Phospho-N-acetylmuramoyl-pentapeptide-transferase (361 aa).

Transmembrane regions (helical) follow at residues 25 to 45, 73 to 93, 98 to 118, 139 to 159, 168 to 188, 200 to 220, 237 to 257, 264 to 284, 289 to 309, and 339 to 359; these read RGIL…PAVI, TMGG…WGDL, VWLV…DDWI, IFGL…AAIT, IALP…IVGF, GLAI…AYAS, AGEL…FLWF, VFMG…IAVI, MVLV…IIQV, and VIVR…ATLK.

The protein belongs to the glycosyltransferase 4 family. MraY subfamily. Mg(2+) is required as a cofactor.

The protein localises to the cell inner membrane. It carries out the reaction UDP-N-acetyl-alpha-D-muramoyl-L-alanyl-gamma-D-glutamyl-meso-2,6-diaminopimeloyl-D-alanyl-D-alanine + di-trans,octa-cis-undecaprenyl phosphate = di-trans,octa-cis-undecaprenyl diphospho-N-acetyl-alpha-D-muramoyl-L-alanyl-D-glutamyl-meso-2,6-diaminopimeloyl-D-alanyl-D-alanine + UMP. It functions in the pathway cell wall biogenesis; peptidoglycan biosynthesis. Functionally, catalyzes the initial step of the lipid cycle reactions in the biosynthesis of the cell wall peptidoglycan: transfers peptidoglycan precursor phospho-MurNAc-pentapeptide from UDP-MurNAc-pentapeptide onto the lipid carrier undecaprenyl phosphate, yielding undecaprenyl-pyrophosphoryl-MurNAc-pentapeptide, known as lipid I. The protein is Phospho-N-acetylmuramoyl-pentapeptide-transferase of Xanthomonas oryzae pv. oryzae (strain MAFF 311018).